The following is a 930-amino-acid chain: MDYSKTLNLPRTDFPMRANLPQREPEILKFWEENDIYGKVQEANRGKPKFILHDGPPYANGHLHLGHTLNKILKDIIIKYHSMNGYDAPYVPGWDTHGLPIEQQAIKNLGLNRHAVDVVEFRNRCRDYALKYVNIQREEFKRLGVRGDWEHPYLTLEPEYEAIQIGIFGEMAKKGYIYKGLKPVYWCTDCETALAEAEVEYGEERSPSIYVKFPVADARGLFEPRGSSIVIWTTTPWTLPANVAIALHPEFKYVLIQVGEERLLMAAELVRPVLELLGVKDYQVVATFTGSELEGVVCRNPLMDRDSVVILGEHVTLEQGTGCVHTAPGHGLEDYEVGMRYHLPVLSPLDDRGRFTEEGGQFAGLFIDEANKAVVKELEARGALLHFGFIKHQYPHCWRCKHPIIFRATEQWFASIEGFRQEALEAIKKVKWIPSWGEDRIYNMVADRSDWCISRQRTWGVPIPIFYCANCGREIINDATISHLQELFRKHGSNVWFAREAGELVPPGLKCPECGSKEFRKETDIMDVWFDSGSSHAAVLATRPELAWPADLYLEGSDQHRGWFNSSLSTAVATRGRAPYRQVLTHGFLVDEEGRKMSKSLGNGIDPADVIRQRGADVLRLWVASADYRRDVAASENIMRQITEAYRKIRNTCRFLLANLADFDPGKDQVPREEMLELDRWAMNRLQRLIARVTMAYDDYEFHVVYHTIHNFCAVDLSAVYLDIIKDRLYTWPAASKGRRSAQTVLYETINVLVRLLTPILAFTTEEIWRYLPGEDDRPISVQLAGWPQVKTEFLDDELEEKWKRILQVRDVVARALERARQEQDLGNSLNAAVHLYPDADMYQFLKPLGDELATIMIVSRVDLHQPGEEAPAGSLEAPELPGLRVYVTGAPGQKCERCWMVSETVGQDTDHPTLCRRCATVVKEMYMNG.

The 'HIGH' region motif lies at 57 to 67 (PYANGHLHLGH). E555 serves as a coordination point for L-isoleucyl-5'-AMP. The short motif at 596–600 (KMSKS) is the 'KMSKS' region element. K599 contacts ATP. C896, C899, C916, and C919 together coordinate Zn(2+).

The protein belongs to the class-I aminoacyl-tRNA synthetase family. IleS type 1 subfamily. In terms of assembly, monomer. It depends on Zn(2+) as a cofactor.

It localises to the cytoplasm. The catalysed reaction is tRNA(Ile) + L-isoleucine + ATP = L-isoleucyl-tRNA(Ile) + AMP + diphosphate. In terms of biological role, catalyzes the attachment of isoleucine to tRNA(Ile). As IleRS can inadvertently accommodate and process structurally similar amino acids such as valine, to avoid such errors it has two additional distinct tRNA(Ile)-dependent editing activities. One activity is designated as 'pretransfer' editing and involves the hydrolysis of activated Val-AMP. The other activity is designated 'posttransfer' editing and involves deacylation of mischarged Val-tRNA(Ile). The chain is Isoleucine--tRNA ligase from Moorella thermoacetica (strain ATCC 39073 / JCM 9320).